The following is a 349-amino-acid chain: GTP 3',8-cyclase (349 aa).

Residues 24–250 (PFGRAVTYLR…DIPYRTGGPA (227 aa)) enclose the Radical SAM core domain. Arginine 33 is a GTP binding site. Residues cysteine 40 and cysteine 44 each coordinate [4Fe-4S] cluster. Tyrosine 46 serves as a coordination point for S-adenosyl-L-methionine. Cysteine 47 lines the [4Fe-4S] cluster pocket. Residue arginine 82 participates in GTP binding. Glycine 86 contributes to the S-adenosyl-L-methionine binding site. Threonine 116 contacts GTP. An S-adenosyl-L-methionine-binding site is contributed by serine 140. Lysine 176 provides a ligand contact to GTP. An S-adenosyl-L-methionine-binding site is contributed by methionine 210. 2 residues coordinate [4Fe-4S] cluster: cysteine 273 and cysteine 276. Residue 278–280 (RVR) participates in GTP binding. Position 290 (cysteine 290) interacts with [4Fe-4S] cluster.

This sequence belongs to the radical SAM superfamily. MoaA family. Monomer and homodimer. Requires [4Fe-4S] cluster as cofactor.

It carries out the reaction GTP + AH2 + S-adenosyl-L-methionine = (8S)-3',8-cyclo-7,8-dihydroguanosine 5'-triphosphate + 5'-deoxyadenosine + L-methionine + A + H(+). Its pathway is cofactor biosynthesis; molybdopterin biosynthesis. Catalyzes the cyclization of GTP to (8S)-3',8-cyclo-7,8-dihydroguanosine 5'-triphosphate. This Rhizobium meliloti (strain 1021) (Ensifer meliloti) protein is GTP 3',8-cyclase.